Consider the following 458-residue polypeptide: Jacalin-related lectin 22 (458 aa).

Jacalin-type lectin domains follow at residues 5–153 (YRKL…YFVL), 160–301 (LYKL…YFGP), and 311–453 (SKKL…TIVP).

This sequence belongs to the jacalin lectin family. In terms of assembly, component of the PYK10 complex, at least composed of PYK10/BGLU23, BGLU21, BGLU22, JAL22, JAL23, PBP1/JAL30, PBP2/JAL31, JAL32, JAL33, JAL34, JAL35, GLL22 and GLL23.

In terms of biological role, inhibitor-type lectin that may regulate the correct polymerization and activation of BGLU23/PYK10 upon tissue damage. This Arabidopsis thaliana (Mouse-ear cress) protein is Jacalin-related lectin 22 (JAL22).